Consider the following 141-residue polypeptide: Endoribonuclease YbeY (141 aa).

Zn(2+) contacts are provided by H105, H109, and D115.

Belongs to the endoribonuclease YbeY family. Zn(2+) is required as a cofactor.

Its subcellular location is the cytoplasm. In terms of biological role, single strand-specific metallo-endoribonuclease involved in late-stage 70S ribosome quality control and in maturation of the 3' terminus of the 16S rRNA. The protein is Endoribonuclease YbeY of Chloroherpeton thalassium (strain ATCC 35110 / GB-78).